A 371-amino-acid chain; its full sequence is Barbiturase 1 (371 aa).

Residues 1 to 103 (MPDAIEVRKV…TIFATVPPED (103 aa)) form an RU A region. Residues arginine 53 and 82–83 (SG) contribute to the substrate site. The RU B stretch occupies residues 115–250 (RLTVGFAMSE…AQVVVVGNAP (136 aa)). Lysine 165 is an active-site residue. Substrate-binding positions include asparagine 197 and 233-234 (SS). Catalysis depends on serine 233, which acts as the Nucleophile. The tract at residues 256–371 (YRIGHSVMKD…GPVAAIVDLG (116 aa)) is RU C. Mg(2+) is bound at residue glutamate 304. Residues lysine 331 and 350 to 351 (SV) contribute to the substrate site. The Mg(2+) site is built by alanine 353, glutamine 356, glycine 357, proline 358, and glycine 361.

Belongs to the cyclic amide hydrolase (CyAH) family. In terms of assembly, homotetramer.

It catalyses the reaction barbiturate + H2O = 3-oxo-3-ureidopropanoate. It participates in pyrimidine metabolism; uracil degradation via oxidative pathway; malonate and urea from uracil: step 2/3. Inhibited by cyanuric acid. In terms of biological role, responsible for the hydrolysis of barbituric acid (2,4,6-trihydroxy-1,3-pyrimidine), an intermediate in the oxidative catabolism of pyrimidines. Catalyzes the hydrolytic opening of the pyrimidine ring of barbituric acid to yield ureidomalonic acid. The protein is Barbiturase 1 of Nocardioides sp. (strain ATCC BAA-499 / JS614).